The chain runs to 93 residues: Large ribosomal subunit protein uL23 (93 aa).

The protein belongs to the universal ribosomal protein uL23 family. In terms of assembly, part of the 50S ribosomal subunit. Contacts protein L29, and trigger factor when it is bound to the ribosome.

Its function is as follows. One of the early assembly proteins it binds 23S rRNA. One of the proteins that surrounds the polypeptide exit tunnel on the outside of the ribosome. Forms the main docking site for trigger factor binding to the ribosome. The protein is Large ribosomal subunit protein uL23 of Campylobacter lari (strain RM2100 / D67 / ATCC BAA-1060).